Consider the following 320-residue polypeptide: tRNA dimethylallyltransferase (320 aa).

16–23 (GPTASGKT) contributes to the ATP binding site. 18–23 (TASGKT) lines the substrate pocket. Interaction with substrate tRNA stretches follow at residues 41–44 (DSAL), 165–169 (QRIQR), and 247–252 (RCVGYR).

The protein belongs to the IPP transferase family. In terms of assembly, monomer. It depends on Mg(2+) as a cofactor.

The enzyme catalyses adenosine(37) in tRNA + dimethylallyl diphosphate = N(6)-dimethylallyladenosine(37) in tRNA + diphosphate. Catalyzes the transfer of a dimethylallyl group onto the adenine at position 37 in tRNAs that read codons beginning with uridine, leading to the formation of N6-(dimethylallyl)adenosine (i(6)A). The chain is tRNA dimethylallyltransferase from Azoarcus sp. (strain BH72).